The primary structure comprises 222 residues: V-type ATP synthase subunit D (222 aa).

This sequence belongs to the V-ATPase D subunit family.

Produces ATP from ADP in the presence of a proton gradient across the membrane. This Acetivibrio thermocellus (strain ATCC 27405 / DSM 1237 / JCM 9322 / NBRC 103400 / NCIMB 10682 / NRRL B-4536 / VPI 7372) (Clostridium thermocellum) protein is V-type ATP synthase subunit D.